A 393-amino-acid chain; its full sequence is MGAVVSRWRAKPSTVEVLEGLDKDIQVLEEYREKNHKQLKLWVYRLLLYSALLYLMACAVVYAWYIPERMIGKLIVASPFLLFPLLIWLLRKLLIILYNKRTERNNEKLEELKAEKKKILEQVMETETYKNAKLILERFDPDSKKKLELETQPIGPTVTPRQGQELRHRLVSPRPTGRPPPVPVPGPSVPGTPLSAPGGPPEKGLSASTPQALIRRPGTPVGTPIPVMGMHPPGPPLARPVLPRERGAVDRVIEYLVGDGPQNRYALICQQCLSHNGMALKEEFEYIAFRCAYCYFLNPARKTRPQAPRLPEFAAEAKTSQDPPAVAMETDLPVSPPAPESKEAGPEPVKAGDGDPQTDEIPTEEMKPGDPEPHTDIPDKSDGEQDVSAMEVE.

The Cytoplasmic segment spans residues 1–45 (MGAVVSRWRAKPSTVEVLEGLDKDIQVLEEYREKNHKQLKLWVYR). Residues 46-66 (LLLYSALLYLMACAVVYAWYI) traverse the membrane as a helical segment. The Lumenal portion of the chain corresponds to 67 to 69 (PER). A helical membrane pass occupies residues 70–90 (MIGKLIVASPFLLFPLLIWLL). The Cytoplasmic segment spans residues 91-393 (RKLLIILYNK…EQDVSAMEVE (303 aa)). Positions 95 to 130 (IILYNKRTERNNEKLEELKAEKKKILEQVMETETYK) form a coiled coil. Residues 146-209 (KLELETQPIG…PPEKGLSAST (64 aa)) are disordered. Pro residues predominate over residues 176–190 (TGRPPPVPVPGPSVP). The C4-type; plays a role in ER morphology zinc-finger motif lies at 269–294 (CQQCLSHNGMALKEEFEYIAFRCAYC). A disordered region spans residues 314–393 (AAEAKTSQDP…EQDVSAMEVE (80 aa)). Basic and acidic residues-rich tracts occupy residues 340 to 353 (ESKEAGPEPVKAGD) and 364 to 383 (EEMKPGDPEPHTDIPDKSDG).

Belongs to the lunapark family. In terms of assembly, homodimer; homodimerization requires the C4-type zinc finger motif and decreases during mitosis in a phosphorylation-dependent manner. In terms of processing, phosphorylated. Phosphorylation occurs during interphase. Phosphorylation also occurs during mitosis; these phosphorylations reduce both its homodimerization and the ER three-way tubular junction formation.

The protein localises to the endoplasmic reticulum membrane. Its function is as follows. Endoplasmic reticulum (ER)-shaping membrane protein that plays a role in determining ER morphology. Involved in the stabilization of nascent three-way ER tubular junctions within the ER network. May also play a role as a curvature-stabilizing protein within three-way ER tubular junction network. This Danio rerio (Zebrafish) protein is Endoplasmic reticulum junction formation protein lunapark-A (lnpka).